Here is a 183-residue protein sequence, read N- to C-terminus: MKLIGITGMPGSGKSAITKLAEKYKITVVSMGDVVRHETSKQGLILNPENVGNTAVKLRELHGKEAIAIPCLNYVNEKYNCEDFVIIEGIRSIYEVNYLKKHAKLDIIAIHSSPKTRFDRLSGRNREDDSNDWNTFVERDERELNFSIGNVIALSDYMVVNEGNYNDFIHDLENTLKNIIKAD.

An ATP-binding site is contributed by 8–15 (GMPGSGKS).

Belongs to the UPF0200 family.

The sequence is that of UPF0200 protein MmarC7_0527 from Methanococcus maripaludis (strain C7 / ATCC BAA-1331).